The chain runs to 258 residues: tRNA pseudouridine synthase A (258 aa).

Catalysis depends on D52, which acts as the Nucleophile. Position 110 (Y110) interacts with substrate.

This sequence belongs to the tRNA pseudouridine synthase TruA family. Homodimer.

The enzyme catalyses uridine(38/39/40) in tRNA = pseudouridine(38/39/40) in tRNA. Formation of pseudouridine at positions 38, 39 and 40 in the anticodon stem and loop of transfer RNAs. The chain is tRNA pseudouridine synthase A from Francisella philomiragia subsp. philomiragia (strain ATCC 25017 / CCUG 19701 / FSC 153 / O#319-036).